An 89-amino-acid chain; its full sequence is Small ribosomal subunit protein uS15 (89 aa).

It belongs to the universal ribosomal protein uS15 family. In terms of assembly, part of the 30S ribosomal subunit. Forms a bridge to the 50S subunit in the 70S ribosome, contacting the 23S rRNA.

In terms of biological role, one of the primary rRNA binding proteins, it binds directly to 16S rRNA where it helps nucleate assembly of the platform of the 30S subunit by binding and bridging several RNA helices of the 16S rRNA. Its function is as follows. Forms an intersubunit bridge (bridge B4) with the 23S rRNA of the 50S subunit in the ribosome. This Acaryochloris marina (strain MBIC 11017) protein is Small ribosomal subunit protein uS15.